The primary structure comprises 543 residues: Protein B602L (543 aa).

13 repeat units span residues 161–164, 165–168, 169–172, 173–176, 177–180, 181–184, 185–188, 189–192, 193–196, 197–200, 201–204, 205–208, and 209–212. Positions 161–212 are 13 X 4 AA tandem repeats of [CN]-[ATV]-[DS]-T; the sequence is CASTCASTCASTCASTCADTNVDTCTDTCASTCADTNVDTCASTCADTCAST.

The protein belongs to the asfivirus B602L family.

The protein localises to the host cytoplasm. Plays an essential role in the assembly of the icosahedral capsid of the virus. Allows the assembly of 3 molecules of hexon protein p72 and formation of a thermostable trimer. This is Protein B602L from African swine fever virus (isolate Pig/Kenya/KEN-50/1950) (ASFV).